Here is a 298-residue protein sequence, read N- to C-terminus: Tyrosine recombinase XerC (298 aa).

In terms of domain architecture, Core-binding (CB) spans 1–83; the sequence is MHAAVERFLH…ALSRFADHLV (83 aa). Residues 104–283 enclose the Tyr recombinase domain; it reads HLPRPVDVDQ…DWQHLADAYD (180 aa). Residues Arg144, Lys166, His235, Arg238, and His261 contribute to the active site. The active-site O-(3'-phospho-DNA)-tyrosine intermediate is the Tyr270.

Belongs to the 'phage' integrase family. XerC subfamily. As to quaternary structure, forms a cyclic heterotetrameric complex composed of two molecules of XerC and two molecules of XerD.

It localises to the cytoplasm. In terms of biological role, site-specific tyrosine recombinase, which acts by catalyzing the cutting and rejoining of the recombining DNA molecules. The XerC-XerD complex is essential to convert dimers of the bacterial chromosome into monomers to permit their segregation at cell division. It also contributes to the segregational stability of plasmids. In Chromohalobacter salexigens (strain ATCC BAA-138 / DSM 3043 / CIP 106854 / NCIMB 13768 / 1H11), this protein is Tyrosine recombinase XerC.